The following is a 109-amino-acid chain: Mitochondrial import receptor subunit TOM22 homolog (109 aa).

Residues 1-60 (MALVRDDFDDIPDSEIHETIVERIEGLGEMFPDALRSAVHSTVDWSIWGVKGVFSLTKST) are Cytoplasmic-facing. Residues 61–77 (IWVVSTTSLIAFLPYII) form a helical membrane-spanning segment. Topologically, residues 78 to 109 (EKERSDLEKTQVAQQRQMLLGPSAAIQQAKTA) are mitochondrial intermembrane.

Belongs to the Tom22 family. In terms of assembly, forms part of the preprotein translocase complex of the outer mitochondrial membrane (TOM complex).

The protein resides in the mitochondrion outer membrane. In terms of biological role, central receptor component of the translocase of the outer membrane of mitochondria (TOM complex) responsible for the recognition and translocation of cytosolically synthesized mitochondrial preproteins. Together with the peripheral receptor tomm-20 functions as the transit peptide receptor and facilitates the movement of preproteins into the translocation pore. The polypeptide is Mitochondrial import receptor subunit TOM22 homolog (Caenorhabditis elegans).